Reading from the N-terminus, the 521-residue chain is Glutamate--cysteine ligase (521 aa).

It belongs to the glutamate--cysteine ligase type 1 family. Type 1 subfamily.

It catalyses the reaction L-cysteine + L-glutamate + ATP = gamma-L-glutamyl-L-cysteine + ADP + phosphate + H(+). It functions in the pathway sulfur metabolism; glutathione biosynthesis; glutathione from L-cysteine and L-glutamate: step 1/2. The chain is Glutamate--cysteine ligase (gshA) from Buchnera aphidicola subsp. Baizongia pistaciae (strain Bp).